The following is a 754-amino-acid chain: 5-methyltetrahydropteroyltriglutamate--homocysteine methyltransferase (754 aa).

Residues 15-18 (RELK) and K114 each bind 5-methyltetrahydropteroyltri-L-glutamate. L-homocysteine is bound by residues 430–432 (IGS) and E483. Residues 430–432 (IGS) and E483 contribute to the L-methionine site. Residues 514 to 515 (RC) and W560 contribute to the 5-methyltetrahydropteroyltri-L-glutamate site. D598 is a binding site for L-homocysteine. Position 598 (D598) interacts with L-methionine. A 5-methyltetrahydropteroyltri-L-glutamate-binding site is contributed by E604. Residues H641, C643, and E665 each contribute to the Zn(2+) site. The active-site Proton donor is the H694. C726 lines the Zn(2+) pocket.

Belongs to the vitamin-B12 independent methionine synthase family. Zn(2+) is required as a cofactor.

The catalysed reaction is 5-methyltetrahydropteroyltri-L-glutamate + L-homocysteine = tetrahydropteroyltri-L-glutamate + L-methionine. Its pathway is amino-acid biosynthesis; L-methionine biosynthesis via de novo pathway; L-methionine from L-homocysteine (MetE route): step 1/1. In terms of biological role, catalyzes the transfer of a methyl group from 5-methyltetrahydrofolate to homocysteine resulting in methionine formation. The protein is 5-methyltetrahydropteroyltriglutamate--homocysteine methyltransferase of Campylobacter jejuni (strain RM1221).